Consider the following 694-residue polypeptide: Frizzled-2 (694 aa).

The N-terminal stretch at 1–22 (MRHNRLKVLILGLVLLLTSCRA) is a signal peptide. The Extracellular segment spans residues 23-315 (DGPLHSADHG…GPFFSNDEKD (293 aa)). The FZ domain maps to 59 to 180 (DPNLRCEEIT…GDPDNLCMEQ (122 aa)). Cystine bridges form between C64–C125, C72–C118, C109–C147, C136–C177, and C140–C164. N78 is a glycosylation site (N-linked (GlcNAc...) asparagine). The segment at 175-253 (NLCMEQPSYT…QGEKASGKEC (79 aa)) is disordered. The span at 187–224 (GSGGSSGGSGGSGSGSGSGGKRKQGGSGSGGSGAGGSS) shows a compositional bias: gly residues. The N-linked (GlcNAc...) asparagine glycan is linked to N288. Residues 316 to 336 (FAGLWIALWSGLCFCSTLMTL) traverse the membrane as a helical segment. Residues 337 to 352 (TTFIIDTERFKYPERP) lie on the Cytoplasmic side of the membrane. A helical transmembrane segment spans residues 353–373 (IVFLSACYFMVAVGYLSRNFL). The Extracellular segment spans residues 374-397 (QNEEIACDGLLLRESSTGPHSCTL). The chain crosses the membrane as a helical span at residues 398 to 418 (VFLLTYFFGMASSIWWVILSF). The Cytoplasmic portion of the chain corresponds to 419-439 (TWFLAAGLKWGNEAITKHSQY). The helical transmembrane segment at 440–460 (FHLAAWLIPTVQSVAVLLLSA) threads the bilayer. At 461-482 (VDGDPILGICYVGNLNPDHLKT) the chain is on the extracellular side. Residues 483–503 (FVLAPLFVYLVIGTTFLMAGF) form a helical membrane-spanning segment. Residues 504 to 534 (VSLFRIRSVIKQQGGVGAGVKADKLEKLMIR) lie on the Cytoplasmic side of the membrane. The helical transmembrane segment at 535 to 555 (IGIFSVLYTVPATIVIGCYLY) threads the bilayer. Residues 556-584 (EAAYFEDWIKALACPCAQVKGPGKKPLYS) lie on the Extracellular side of the membrane. The helical transmembrane segment at 585-605 (VLMLKYFMALAVGITSGVWIW) threads the bilayer. Topologically, residues 606-694 (SGKTLESWRR…VLKQPAASHV (89 aa)) are cytoplasmic. The short motif at 608 to 613 (KTLESW) is the Lys-Thr-X-X-X-Trp motif, mediates interaction with the PDZ domain of Dvl family members element. Positions 692 to 694 (SHV) match the PDZ-binding motif.

This sequence belongs to the G-protein coupled receptor Fz/Smo family. As to quaternary structure, interacts with ATP6AP2.

The protein localises to the cell membrane. Its function is as follows. Receptor for Wnt proteins. Most of frizzled receptors are coupled to the beta-catenin canonical signaling pathway, which leads to the activation of disheveled proteins, inhibition of GSK-3 kinase, nuclear accumulation of beta-catenin and activation of Wnt target genes. A second signaling pathway involving PKC and calcium fluxes has been seen for some family members, but it is not yet clear if it represents a distinct pathway or if it can be integrated in the canonical pathway, as PKC seems to be required for Wnt-mediated inactivation of GSK-3 kinase. Both pathways seem to involve interactions with G-proteins. Required to coordinate the cytoskeletons of epidermal cells to produce a parallel array of cuticular hairs and bristles. The protein is Frizzled-2 (fz2) of Drosophila melanogaster (Fruit fly).